We begin with the raw amino-acid sequence, 888 residues long: Valine--tRNA ligase (888 aa).

The short motif at 43–53 (PFTSGTLHLGH) is the 'HIGH' region element. The 'KMSKS' region signature appears at 534 to 538 (KMSKS). Lys-537 lines the ATP pocket.

The protein belongs to the class-I aminoacyl-tRNA synthetase family. ValS type 2 subfamily.

Its subcellular location is the cytoplasm. It catalyses the reaction tRNA(Val) + L-valine + ATP = L-valyl-tRNA(Val) + AMP + diphosphate. Its function is as follows. Catalyzes the attachment of valine to tRNA(Val). As ValRS can inadvertently accommodate and process structurally similar amino acids such as threonine, to avoid such errors, it has a 'posttransfer' editing activity that hydrolyzes mischarged Thr-tRNA(Val) in a tRNA-dependent manner. This is Valine--tRNA ligase from Thermococcus kodakarensis (strain ATCC BAA-918 / JCM 12380 / KOD1) (Pyrococcus kodakaraensis (strain KOD1)).